The primary structure comprises 44 residues: U4-ctenitoxin-Pk1a (44 aa).

Intrachain disulfides connect Cys-4/Cys-18, Cys-11/Cys-24, Cys-15/Cys-42, Cys-17/Cys-33, and Cys-26/Cys-31.

As to expression, expressed by the venom gland.

It localises to the secreted. Functionally, neurotoxin. Causes spastic paralysis and death in mice within 10 minutes at dose levels of 3 ug per mouse. The protein is U4-ctenitoxin-Pk1a of Phoneutria keyserlingi (Brazilian wandering spider).